Consider the following 66-residue polypeptide: Large ribosomal subunit protein bL35 (66 aa).

Residues 20–41 form a disordered region; the sequence is GKVMSAQRGKRHGMIKRTKKQI. Basic residues predominate over residues 27-41; it reads RGKRHGMIKRTKKQI.

The protein belongs to the bacterial ribosomal protein bL35 family.

In Rhodopseudomonas palustris (strain BisB5), this protein is Large ribosomal subunit protein bL35.